The primary structure comprises 121 residues: Large ribosomal subunit protein uL24 (121 aa).

This sequence belongs to the universal ribosomal protein uL24 family. In terms of assembly, part of the 50S ribosomal subunit.

Its function is as follows. One of two assembly initiator proteins, it binds directly to the 5'-end of the 23S rRNA, where it nucleates assembly of the 50S subunit. In terms of biological role, located at the polypeptide exit tunnel on the outside of the subunit. This chain is Large ribosomal subunit protein uL24, found in Pyrococcus abyssi (strain GE5 / Orsay).